The following is a 303-amino-acid chain: N-acetyl-D-glucosamine kinase (303 aa).

ATP-binding positions include 4-11 and 133-140; these read GFDIGGTK and GVGGGLIF. Zn(2+) is bound by residues histidine 157, cysteine 177, cysteine 179, and cysteine 184.

It belongs to the ROK (NagC/XylR) family. NagK subfamily.

The catalysed reaction is N-acetyl-D-glucosamine + ATP = N-acetyl-D-glucosamine 6-phosphate + ADP + H(+). The protein operates within cell wall biogenesis; peptidoglycan recycling. In terms of biological role, catalyzes the phosphorylation of N-acetyl-D-glucosamine (GlcNAc) derived from cell-wall degradation, yielding GlcNAc-6-P. This is N-acetyl-D-glucosamine kinase from Escherichia coli O7:K1 (strain IAI39 / ExPEC).